The primary structure comprises 402 residues: N-acetyltransferase Eis (402 aa).

The 152-residue stretch at 3–154 (VTLCSPTEDD…RFARFHADAP (152 aa)) folds into the N-acetyltransferase domain. Residues 85 to 87 (VAV), 93 to 98 (RRGLLR), and 121 to 122 (SE) contribute to the acetyl-CoA site. The active-site Proton donor is Tyr126. The active-site Proton acceptor; via carboxylate is Phe402.

The protein belongs to the acetyltransferase Eis family. In terms of assembly, homohexamer; trimer of dimers.

The protein resides in the secreted. Its subcellular location is the host cytoplasmic vesicle. The protein localises to the host phagosome. It is found in the extracellular vesicle. It localises to the bacterial extracellular vesicle. The protein resides in the host extracellular space. It carries out the reaction L-lysyl-[protein] + acetyl-CoA = N(6)-acetyl-L-lysyl-[protein] + CoA + H(+). Its function is as follows. Effector that is released into the host cell and affects host immune responses. Acts as an acetyltransferase that acetylates lysine residues of host proteins. The chain is N-acetyltransferase Eis from Mycobacterium bovis (strain ATCC BAA-935 / AF2122/97).